The primary structure comprises 299 residues: N-acetylmuramic acid 6-phosphate etherase (299 aa).

Positions 55 to 218 (CINCLEKNGR…STTVMVKMGK (164 aa)) constitute an SIS domain. The active-site Proton donor is E83. Residue E114 is part of the active site.

This sequence belongs to the GCKR-like family. MurNAc-6-P etherase subfamily. Homodimer.

It carries out the reaction N-acetyl-D-muramate 6-phosphate + H2O = N-acetyl-D-glucosamine 6-phosphate + (R)-lactate. It functions in the pathway amino-sugar metabolism; N-acetylmuramate degradation. In terms of biological role, specifically catalyzes the cleavage of the D-lactyl ether substituent of MurNAc 6-phosphate, producing GlcNAc 6-phosphate and D-lactate. The polypeptide is N-acetylmuramic acid 6-phosphate etherase (Pseudothermotoga lettingae (strain ATCC BAA-301 / DSM 14385 / NBRC 107922 / TMO) (Thermotoga lettingae)).